Here is a 470-residue protein sequence, read N- to C-terminus: Pheromone a factor receptor (470 aa).

Over 1 to 5 the chain is Extracellular; sequence MSYKS. A helical membrane pass occupies residues 6 to 23; sequence AIIGLCLLAVILLAPPLA. At 24-29 the chain is on the cytoplasmic side; the sequence is WHSHTK. The helical transmembrane segment at 30–53 threads the bilayer; it reads NIPAIILITWLLTMNLTCIVDAAI. Residues 54-70 are Extracellular-facing; sequence WSDDDFLTRWDGKGWCD. A helical transmembrane segment spans residues 71-98; sequence IVIKLQVGANIGISCAVTNIIYNLHTIL. Residues 99–116 lie on the Cytoplasmic side of the membrane; sequence KADSVLPDLSSWTKIVKD. A helical membrane pass occupies residues 117 to 134; the sequence is LVISLFTPVMVMGFSYLL. At 135–155 the chain is on the extracellular side; the sequence is QVFRYGIARYNGCQNLLSPTW. A helical membrane pass occupies residues 156–183; the sequence is ITTVLYTMWMLIWSFVGAVYATLVLFVF. The Cytoplasmic portion of the chain corresponds to 184–205; the sequence is YKKRKDVRDILHCTNSGLNLTR. A helical transmembrane segment spans residues 206–228; sequence FARLLIFCFIIILVMFPFSVYTF. Over 229–266 the chain is Extracellular; sequence VQDLQQVEGHYTFKNTHSSTIWNTIIKFDPGRPIYNIW. The helical transmembrane segment at 267–285 threads the bilayer; it reads LYVLMSYLVFLIFGLGSDA. Over 286–470 the chain is Cytoplasmic; it reads LHMYSKFLRS…EHSSENTAGP (185 aa). A hydrophilic region spans residues 300 to 470; the sequence is FVLDMWKRFI…EHSSENTAGP (171 aa). The disordered stretch occupies residues 440–470; sequence NFEGESLCYSPASKEENSSSNEHSSENTAGP.

Belongs to the G-protein coupled receptor 4 family.

It is found in the membrane. In terms of biological role, receptor for the peptide pheromone a factor. The sequence is that of Pheromone a factor receptor (STE3) from Saccharomyces cerevisiae (strain ATCC 204508 / S288c) (Baker's yeast).